The chain runs to 287 residues: Elongation factor Ts (287 aa).

The segment at 80–83 (TDFL) is involved in Mg(2+) ion dislocation from EF-Tu.

It belongs to the EF-Ts family.

It localises to the cytoplasm. Functionally, associates with the EF-Tu.GDP complex and induces the exchange of GDP to GTP. It remains bound to the aminoacyl-tRNA.EF-Tu.GTP complex up to the GTP hydrolysis stage on the ribosome. The chain is Elongation factor Ts from Pseudomonas putida (strain ATCC 47054 / DSM 6125 / CFBP 8728 / NCIMB 11950 / KT2440).